Reading from the N-terminus, the 277-residue chain is Outer plastidial membrane protein porin (277 aa).

It belongs to the eukaryotic mitochondrial porin (TC 1.B.8.1) family.

Its subcellular location is the plastid outer membrane. Forms a channel through the cell membrane that allows diffusion of small hydrophilic molecules. The channel adopts an open conformation at low or zero membrane potential and a closed conformation at potentials above 30-40 mV. The open state has a weak anion selectivity whereas the closed state is cation-selective. The polypeptide is Outer plastidial membrane protein porin (POR1) (Zea mays (Maize)).